The chain runs to 330 residues: Aspartate--ammonia ligase (330 aa).

It belongs to the class-II aminoacyl-tRNA synthetase family. AsnA subfamily.

It localises to the cytoplasm. It carries out the reaction L-aspartate + NH4(+) + ATP = L-asparagine + AMP + diphosphate + H(+). Its pathway is amino-acid biosynthesis; L-asparagine biosynthesis; L-asparagine from L-aspartate (ammonia route): step 1/1. The polypeptide is Aspartate--ammonia ligase (Enterobacter sp. (strain 638)).